Reading from the N-terminus, the 106-residue chain is Cytochrome c2 (106 aa).

Heme c contacts are provided by C19, C22, H23, and M84.

Belongs to the cytochrome c family. Post-translationally, binds 1 heme c group covalently per subunit.

The chain is Cytochrome c2 from Rhodopila globiformis (Rhodopseudomonas globiformis).